Reading from the N-terminus, the 387-residue chain is MATTKSFLILIVMILATTSSTFASLEEMVTVLSIDGGGIKGIIPGTILEFLEGQLQKMDNNADARLADYFDVIGGTSTGGLLTAMITTPNENNRPFAAANEIVPFYFEHGPHIFNSSTGQFFGPKYDGKYLMQVLQEKLGETRVHQALTEVAISSFDIKTNKPVIFTKSNLAKSPELDAKMYDICYSTAAAPTYFPPHYFATNTINGDKYEFNLVDGAVATVADPALLSVSVATRRAQEDPAFASIRSLNYKKMLLLSLGTGTTSEFDKTHTAEETAKWGALQWMLVIQQMTEAASSYMTDYYLSTVFQDLHSQNNYLRVQENALTGTTTKADDASEANMELLAQVGENLLKKPVSKDNPETYEEALKRFAKLLSDRKKLRANKASY.

Positions 1 to 23 (MATTKSFLILIVMILATTSSTFA) are cleaved as a signal peptide. The PNPLA domain occupies 32–230 (LSIDGGGIKG…TVADPALLSV (199 aa)). The short motif at 36–41 (GGGIKG) is the GXGXXG element. The short motif at 75–79 (GTSTG) is the GXSXG element. The active-site Nucleophile is Ser-77. Residue Asn-115 is glycosylated (N-linked (GlcNAc...) asparagine). Residue Asp-216 is the Proton acceptor of the active site. Positions 216–218 (DGA) match the DGA/G motif. Residues 361-385 (ETYEEALKRFAKLLSDRKKLRANKA) adopt a coiled-coil conformation.

The protein belongs to the patatin family. As to expression, tuber and stolon.

It is found in the vacuole. Probable lipolytic acyl hydrolase (LAH), an activity which is thought to be involved in the response of tubers to pathogens. The sequence is that of Patatin-02 from Solanum tuberosum (Potato).